The following is a 736-amino-acid chain: Subtilisin-like protease SBT4.11 (736 aa).

A signal peptide spans 1–25; the sequence is MAKRGAFSSFHSFLIVLLFLNSVLA. A propeptide spans 26–113 (activation peptide); it reads VTHGHQDKQV…VFPNKKLKLQ (88 aa). Residues 35 to 112 form the Inhibitor I9 domain; sequence VYIVYMGSLP…SVFPNKKLKL (78 aa). A Peptidase S8 domain is found at 117 to 579; it reads SWDFMGLKEG…AGHVDPIAAT (463 aa). Asp145 (charge relay system) is an active-site residue. Asn176 carries N-linked (GlcNAc...) asparagine glycosylation. The active-site Charge relay system is His200. Residues Asn215 and Asn223 are each glycosylated (N-linked (GlcNAc...) asparagine). One can recognise a PA domain in the interval 355–437; the sequence is KFPLVYGKSA…GLQKDDFESV (83 aa). Ser518 serves as the catalytic Charge relay system. 5 N-linked (GlcNAc...) asparagine glycosylation sites follow: Asn555, Asn602, Asn638, Asn646, and Asn656.

It belongs to the peptidase S8 family. In terms of processing, the C-terminal propeptide is autocleaved.

It localises to the secreted. The polypeptide is Subtilisin-like protease SBT4.11 (Arabidopsis thaliana (Mouse-ear cress)).